We begin with the raw amino-acid sequence, 473 residues long: Ribulose bisphosphate carboxylase large chain (473 aa).

The propeptide occupies 1–2; sequence MS. The residue at position 3 (P3) is an N-acetylproline. Position 14 is an N6,N6,N6-trimethyllysine (K14). Substrate-binding residues include N123 and T173. K175 acts as the Proton acceptor in catalysis. K177 contributes to the substrate binding site. Residues K201, D203, and E204 each coordinate Mg(2+). K201 is modified (N6-carboxylysine). H294 functions as the Proton acceptor in the catalytic mechanism. Substrate contacts are provided by R295, H327, and S379.

This sequence belongs to the RuBisCO large chain family. Type I subfamily. As to quaternary structure, heterohexadecamer of 8 large chains and 8 small chains; disulfide-linked. The disulfide link is formed within the large subunit homodimers. Mg(2+) is required as a cofactor. Post-translationally, the disulfide bond which can form in the large chain dimeric partners within the hexadecamer appears to be associated with oxidative stress and protein turnover.

It is found in the plastid. Its subcellular location is the chloroplast. The catalysed reaction is 2 (2R)-3-phosphoglycerate + 2 H(+) = D-ribulose 1,5-bisphosphate + CO2 + H2O. It catalyses the reaction D-ribulose 1,5-bisphosphate + O2 = 2-phosphoglycolate + (2R)-3-phosphoglycerate + 2 H(+). Its function is as follows. RuBisCO catalyzes two reactions: the carboxylation of D-ribulose 1,5-bisphosphate, the primary event in carbon dioxide fixation, as well as the oxidative fragmentation of the pentose substrate in the photorespiration process. Both reactions occur simultaneously and in competition at the same active site. This chain is Ribulose bisphosphate carboxylase large chain, found in Sesbania sesban (Egyptian riverhemp).